A 373-amino-acid polypeptide reads, in one-letter code: Carboxylesterase/phospholipase LipF (373 aa).

The Involved in the stabilization of the negatively charged intermediate by the formation of the oxyanion hole signature appears at 116–118 (HGG). Active-site residues include Ser-186, Glu-285, and His-315.

This sequence belongs to the 'GDXG' lipolytic enzyme family.

The enzyme catalyses a carboxylic ester + H2O = an alcohol + a carboxylate + H(+). The catalysed reaction is a 1,2-diacyl-sn-glycero-3-phosphocholine + H2O = phosphocholine + a 1,2-diacyl-sn-glycerol + H(+). In terms of biological role, a short-chain esterase and phospholipase. The sequence is that of Carboxylesterase/phospholipase LipF from Mycobacterium tuberculosis (strain CDC 1551 / Oshkosh).